A 1363-amino-acid polypeptide reads, in one-letter code: Neurexin-1 (1363 aa).

The Extracellular segment spans residues 1–1287; that stretch reads SKRRDMTVFS…EVIRESSSTT (1287 aa). N-linked (GlcNAc...) asparagine glycosylation is present at asparagine 49. The 39-residue stretch at 67-105 folds into the EGF-like 1 domain; that stretch reads QSRLCAREDVCLNGGVCSVLNDQAVCDCSQTGFRGKDCS. Disulfide bonds link cysteine 71–cysteine 83, cysteine 77–cysteine 92, and cysteine 94–cysteine 104. 2 consecutive Laminin G-like domains span residues 132–329 and 336–528; these read IATF…AFKC and DPIT…KPSC. Ca(2+) contacts are provided by aspartate 178, leucine 195, and methionine 263. 5 cysteine pairs are disulfide-bonded: cysteine 293/cysteine 329, cysteine 499/cysteine 528, cysteine 536/cysteine 547, cysteine 541/cysteine 556, and cysteine 558/cysteine 568. One can recognise an EGF-like 2 domain in the interval 532–569; sequence TAKPCLSNPCKNNGVCRDGWNRYVCDCSGTGYLGRSCE. Laminin G-like domains are found at residues 574-747 and 761-936; these read ILSY…IDYC and DPVT…ERGC. Asparagine 646 carries an N-linked (GlcNAc...) asparagine glycan. Disulfide bonds link cysteine 908-cysteine 936, cysteine 943-cysteine 954, cysteine 948-cysteine 963, and cysteine 965-cysteine 975. Residues 939–976 form the EGF-like 3 domain; the sequence is PSTTCQEDSCANQGVCLQQWDGFSCDCSMTSFSGPLCN. The Laminin G-like 5 domain maps to 982–1180; it reads YIFSKGGGQI…DANIVIEGNV (199 aa). N-linked (GlcNAc...) asparagine glycosylation is present at asparagine 1079. A disordered region spans residues 1244-1280; it reads CPSDDEDIDPCEPSSGGLANPTRAGGGREYPGSSEVI. The chain crosses the membrane as a helical span at residues 1288–1308; sequence GMVVGIVAAAALCILILLYAM. Residues 1309–1363 lie on the Cytoplasmic side of the membrane; that stretch reads YKYRNRDEGSYHVDESRNYISNSAQSNGAVIKEKQPNSAKSSNKNKKNKDKEYYV. A disordered region spans residues 1330 to 1363; the sequence is NSAQSNGAVIKEKQPNSAKSSNKNKKNKDKEYYV.

It belongs to the neurexin family. In terms of assembly, the cytoplasmic C-terminal region binds to CASK. The laminin G-like domain 1 binds to NXPH1. Specific isoforms bind to alpha-dystroglycan and to alpha-latrotoxin. In terms of processing, N- and O-glycosylated.

It is found in the membrane. In terms of biological role, neuronal cell surface protein that may be involved in cell recognition and cell adhesion. May mediate intracellular signaling. The protein is Neurexin-1 (NRXN1) of Gallus gallus (Chicken).